We begin with the raw amino-acid sequence, 183 residues long: Small ribosomal subunit protein uS5 (183 aa).

In terms of domain architecture, S5 DRBM spans Phe11–Val71.

This sequence belongs to the universal ribosomal protein uS5 family. As to quaternary structure, part of the 30S ribosomal subunit. Contacts proteins S4 and S8.

Functionally, with S4 and S12 plays an important role in translational accuracy. In terms of biological role, located at the back of the 30S subunit body where it stabilizes the conformation of the head with respect to the body. This chain is Small ribosomal subunit protein uS5, found in Micrococcus luteus (Micrococcus lysodeikticus).